We begin with the raw amino-acid sequence, 520 residues long: Acetyltransferase MAT1 (520 aa).

Catalysis depends on proton acceptor residues His183 and Asp456.

It belongs to the plant acyltransferase family.

It functions in the pathway secondary metabolite biosynthesis. Acyl-CoA-dependent acyltransferase; part of the gene cluster that mediates the biosynthesis of mannosylerythritol lipids (MELs), surface-active substances that enhance the availability of water-insoluble substrates. Depending on the number of acetyl groups, mannosylerythritol lipids can be differentiated into MEL A (fully acetylated), MEL B and MEL C (monoacetylated at R-6 and R-4, respectively), and the fully deacetylated MEL D. The first step in the pathway is the generation of mannosylerythritol by the glycosyltransferase EMT1 which catalyzes the transfer of GDP-mannose to the C-4 atom of meso-erythritol. This reaction has to be stereospecific, since only mannosyl-D-erythritol is generated. The produced disaccharide is subsequently acylated with fatty acids of various lengths by the acyltransferases MAC1 and MAC2 at positions C-2 and C-3, repectively. The existence of MEL derivatives which carry an acetyl group at C-2 implies that at least MAC1 also accepts acetyl-CoA as a donor. The final step of MEL biosynthesis is the acetylation of the fully acylated mannosylerythritol lipids catalyzed by the acetyl-CoA-dependent acetyltransferase MAT1. MAT1 displays a relaxed regioselectivity and is able to transfer acetylgroups to both positions C-4 and C-6 of the mannosyl moiety. The chain is Acetyltransferase MAT1 from Pseudozyma antarctica (strain T-34) (Yeast).